We begin with the raw amino-acid sequence, 297 residues long: 4-hydroxy-tetrahydrodipicolinate synthase (297 aa).

Thr-49 is a binding site for pyruvate. The active-site Proton donor/acceptor is the Tyr-137. Residue Lys-166 is the Schiff-base intermediate with substrate of the active site. Ile-208 lines the pyruvate pocket.

The protein belongs to the DapA family. In terms of assembly, homotetramer; dimer of dimers.

It localises to the cytoplasm. It catalyses the reaction L-aspartate 4-semialdehyde + pyruvate = (2S,4S)-4-hydroxy-2,3,4,5-tetrahydrodipicolinate + H2O + H(+). It participates in amino-acid biosynthesis; L-lysine biosynthesis via DAP pathway; (S)-tetrahydrodipicolinate from L-aspartate: step 3/4. In terms of biological role, catalyzes the condensation of (S)-aspartate-beta-semialdehyde [(S)-ASA] and pyruvate to 4-hydroxy-tetrahydrodipicolinate (HTPA). This is 4-hydroxy-tetrahydrodipicolinate synthase from Phocaeicola vulgatus (strain ATCC 8482 / DSM 1447 / JCM 5826 / CCUG 4940 / NBRC 14291 / NCTC 11154) (Bacteroides vulgatus).